The following is a 528-amino-acid chain: MGIAKMTNKLSLLLQKPYVHHQLSVAELVEKVLHRNEGRLTHTGAVAVTTGKYTGRSPKDKYIVEEPSTKQNIDWGTVNQPMAPETFQKLYDKVLDYLMKKDELFVFKGFAGADPKARLPIQVVNEFAWHNLFVHQLFIRPSAEELADHEPQFTVICAPNFKADPAVDGTRSEAFIIISFEQRTVLIGGTEYAGEMKKSIFSVMNYLLPEQGILPMHCSANVGQEGDVALFFGLSGTGKTTLSTDPKRRLIGDDEHGWSSRGIFNIEGGCYAKCINLSREKEPQIFDAIGFGAVLENVILHDATRVPDYDDGTLTENTRAAYPLQAIKNIVDPSVAGHPSTIVFLTADAFGVLPPISKLTREQAMYHFLSGYTSKLAGTERGVTEPEATFSTCFGAPFLPRPAVEYAEMLGQKIAEHNVRVFLVNTGWTGGPYGVGSRMKLAYTRAMVQAAVEGELDNVETVQDPIFGLAIPAHVPGVPDDVLRPQNTWADKQAYEQKAKELAEKFRANFQKFAHIDPSIEKLGGPLV.

Positions 56, 192, and 198 each coordinate substrate. Residues Lys-198, His-217, and 233-241 (GLSGTGKTT) each bind ATP. The Mn(2+) site is built by Lys-198 and His-217. Asp-254 lines the Mn(2+) pocket. ATP contacts are provided by Glu-282, Arg-319, and Thr-444. Arg-319 contacts substrate.

The protein belongs to the phosphoenolpyruvate carboxykinase (ATP) family. The cofactor is Mn(2+).

The protein localises to the cytoplasm. The enzyme catalyses oxaloacetate + ATP = phosphoenolpyruvate + ADP + CO2. It participates in carbohydrate biosynthesis; gluconeogenesis. Functionally, involved in the gluconeogenesis. Catalyzes the conversion of oxaloacetate (OAA) to phosphoenolpyruvate (PEP) through direct phosphoryl transfer between the nucleoside triphosphate and OAA. This is Phosphoenolpyruvate carboxykinase (ATP) from Geobacillus thermodenitrificans (strain NG80-2).